Reading from the N-terminus, the 216-residue chain is 7-carboxy-7-deazaguanine synthase (216 aa).

Substrate contacts are provided by residues 12 to 14 (LQG) and Arg27. Residues 18-216 (RAGRAAVFCR…LQTHKYLGIP (199 aa)) enclose the Radical SAM core domain. [4Fe-4S] cluster-binding residues include Cys31, Cys46, and Cys49. A Mg(2+)-binding site is contributed by Thr51. A substrate-binding site is contributed by Thr93. S-adenosyl-L-methionine contacts are provided by residues Gly95, 136 to 138 (SPK), and 176 to 179 (QPRD). Pro216 is a substrate binding site.

It belongs to the radical SAM superfamily. 7-carboxy-7-deazaguanine synthase family. Homodimer. It depends on [4Fe-4S] cluster as a cofactor. S-adenosyl-L-methionine serves as cofactor. Requires Mg(2+) as cofactor.

The catalysed reaction is 6-carboxy-5,6,7,8-tetrahydropterin + H(+) = 7-carboxy-7-deazaguanine + NH4(+). It participates in purine metabolism; 7-cyano-7-deazaguanine biosynthesis. Catalyzes the complex heterocyclic radical-mediated conversion of 6-carboxy-5,6,7,8-tetrahydropterin (CPH4) to 7-carboxy-7-deazaguanine (CDG), a step common to the biosynthetic pathways of all 7-deazapurine-containing compounds. This Nitratidesulfovibrio vulgaris (strain ATCC 29579 / DSM 644 / CCUG 34227 / NCIMB 8303 / VKM B-1760 / Hildenborough) (Desulfovibrio vulgaris) protein is 7-carboxy-7-deazaguanine synthase.